Consider the following 296-residue polypeptide: NAD kinase (296 aa).

The Proton acceptor role is filled by Asp72. Residues Asp72–Gly73, Asn146–Asp147, Arg157, Lys174, Asp176, Thr187–Ser192, and Gln247 each bind NAD(+).

This sequence belongs to the NAD kinase family. A divalent metal cation is required as a cofactor.

Its subcellular location is the cytoplasm. It catalyses the reaction NAD(+) + ATP = ADP + NADP(+) + H(+). In terms of biological role, involved in the regulation of the intracellular balance of NAD and NADP, and is a key enzyme in the biosynthesis of NADP. Catalyzes specifically the phosphorylation on 2'-hydroxyl of the adenosine moiety of NAD to yield NADP. In Pseudomonas savastanoi pv. phaseolicola (strain 1448A / Race 6) (Pseudomonas syringae pv. phaseolicola (strain 1448A / Race 6)), this protein is NAD kinase.